A 382-amino-acid polypeptide reads, in one-letter code: FK506-binding protein 4 (382 aa).

Residues 139–274 (GLEVDEEIES…KEEPKKKITK (136 aa)) form a disordered region. Residues 141-173 (EVDEEIESDEEVESDEEIESDEEIESEEEEEEP) show a composition bias toward acidic residues. Basic and acidic residues-rich tracts occupy residues 180-190 (RPAEEVKEIAS) and 196-270 (EKKE…EPKK). The PPIase FKBP-type domain maps to 295 to 382 (GQRVGMRYIG…VFDVKLLSMK (88 aa)).

Belongs to the FKBP-type PPIase family. FKBP3/4 subfamily. As to quaternary structure, binds to histones H3 and H4.

It localises to the nucleus. It carries out the reaction [protein]-peptidylproline (omega=180) = [protein]-peptidylproline (omega=0). With respect to regulation, inhibited by both FK506 and rapamycin. Its function is as follows. PPIase that acts as a histone chaperone. Histone proline isomerase that increases the rate of cis-trans isomerization at prolines on the histone H3 N-terminal tail. Proline isomerization influences H3 methylation thereby regulating gene expression. The sequence is that of FK506-binding protein 4 (FKBP4) from Rhizopus delemar (strain RA 99-880 / ATCC MYA-4621 / FGSC 9543 / NRRL 43880) (Mucormycosis agent).